Consider the following 94-residue polypeptide: Virion membrane protein OPG135 (94 aa).

An N-terminal signal peptide occupies residues 1–22 (MSCYTAILKSVGGLALFQVANG). Residues 23–45 (AIDLCRHFFMYFCEQKLRPNSFW) lie on the Intravirion side of the membrane. The chain crosses the membrane as a helical span at residues 46-66 (FVVVRAIASMIMYLVLGIALL). At 67 to 83 (YISEQDNKKNTNNDKRN) the chain is on the virion surface side. Over residues 74–84 (KKNTNNDKRNE) the composition is skewed to basic and acidic residues. The disordered stretch occupies residues 74 to 94 (KKNTNNDKRNESSINSNSSPK). An N-linked (GlcNAc...) asparagine; by host glycan is attached at Asn83. Residues 85-94 (SSINSNSSPK) are compositionally biased toward polar residues.

It belongs to the oerthopoxvirus OPG135 family.

The protein resides in the virion membrane. It is found in the host cytoplasm. Its function is as follows. Envelope protein. Required for an early step in virion morphogenesis. The chain is Virion membrane protein OPG135 (OPG135) from Homo sapiens (Human).